A 926-amino-acid polypeptide reads, in one-letter code: Beta-mannosidase A (926 aa).

Residues 1 to 21 form the signal peptide; that stretch reads MHVKAETVLALLTPAPPSVVG. N-linked (GlcNAc...) asparagine glycans are attached at residues N40, N242, N277, N311, and N342. Catalysis depends on E474, which acts as the Proton donor. 10 N-linked (GlcNAc...) asparagine glycosylation sites follow: N532, N603, N626, N653, N733, N756, N785, N793, N819, and N905.

This sequence belongs to the glycosyl hydrolase 2 family. Beta-mannosidase A subfamily. In terms of assembly, homodimer.

The protein resides in the secreted. The catalysed reaction is Hydrolysis of terminal, non-reducing beta-D-mannose residues in beta-D-mannosides.. The protein operates within glycan metabolism; N-glycan degradation. In terms of biological role, exoglycosidase that cleaves the single beta-linked mannose residue from the non-reducing end of beta-mannosidic oligosaccharides of various complexity and length. Involved in the degradation of polymeric mannan and galactomannan. This chain is Beta-mannosidase A (mndA), found in Aspergillus fumigatus (strain CBS 144.89 / FGSC A1163 / CEA10) (Neosartorya fumigata).